A 74-amino-acid chain; its full sequence is Protein kish-B (74 aa).

The signal sequence occupies residues 1–22; that stretch reads MTNVYSFDGILVFGLLFICTCA. Residues 23–52 lie on the Extracellular side of the membrane; the sequence is YLKKVPRLNSWLLSEKKGVWGVFYKAAVIG. A helical membrane pass occupies residues 53 to 73; that stretch reads TRLHVVVAASCLCMAFYLIFL. Residue lysine 74 is a topological domain, cytoplasmic.

It belongs to the KISH family.

It is found in the golgi apparatus membrane. Its function is as follows. Involved in the early part of the secretory pathway. The protein is Protein kish-B (tmem167b) of Danio rerio (Zebrafish).